The sequence spans 486 residues: Cysteine--tRNA ligase (486 aa).

Cys29 contributes to the Zn(2+) binding site. A 'HIGH' region motif is present at residues 31–41 (VTVYDYCHLGH). 3 residues coordinate Zn(2+): Cys214, His239, and Glu243. The 'KMSKS' region motif lies at 271–275 (KMSKS). Residue Lys274 participates in ATP binding.

It belongs to the class-I aminoacyl-tRNA synthetase family. As to quaternary structure, monomer. Requires Zn(2+) as cofactor.

The protein localises to the cytoplasm. It carries out the reaction tRNA(Cys) + L-cysteine + ATP = L-cysteinyl-tRNA(Cys) + AMP + diphosphate. This is Cysteine--tRNA ligase from Nostoc sp. (strain PCC 7120 / SAG 25.82 / UTEX 2576).